We begin with the raw amino-acid sequence, 175 residues long: 3-hydroxydecanoyl-[acyl-carrier-protein] dehydratase (175 aa).

H74 is an active-site residue.

The protein belongs to the thioester dehydratase family. FabA subfamily. In terms of assembly, homodimer.

The protein resides in the cytoplasm. The catalysed reaction is a (3R)-hydroxyacyl-[ACP] = a (2E)-enoyl-[ACP] + H2O. The enzyme catalyses (3R)-hydroxydecanoyl-[ACP] = (2E)-decenoyl-[ACP] + H2O. It catalyses the reaction (2E)-decenoyl-[ACP] = (3Z)-decenoyl-[ACP]. The protein operates within lipid metabolism; fatty acid biosynthesis. Functionally, necessary for the introduction of cis unsaturation into fatty acids. Catalyzes the dehydration of (3R)-3-hydroxydecanoyl-ACP to E-(2)-decenoyl-ACP and then its isomerization to Z-(3)-decenoyl-ACP. Can catalyze the dehydratase reaction for beta-hydroxyacyl-ACPs with saturated chain lengths up to 16:0, being most active on intermediate chain length. In Alcanivorax borkumensis (strain ATCC 700651 / DSM 11573 / NCIMB 13689 / SK2), this protein is 3-hydroxydecanoyl-[acyl-carrier-protein] dehydratase.